Consider the following 339-residue polypeptide: Protein FAM50A (339 aa).

The tract at residues 1–31 (MAQYKGAASEAGRAMHLMKKREKQREQMEQM) is disordered. A2 is modified (N-acetylalanine). K100 is covalently cross-linked (Glycyl lysine isopeptide (Lys-Gly) (interchain with G-Cter in SUMO2)). The disordered stretch occupies residues 150-177 (TTKKKKLGKNPDVDTSFLPDRDREEEEN). The short motif at 152–155 (KKKK) is the Nuclear localization signal element. The span at 168–177 (PDRDREEEEN) shows a compositional bias: basic and acidic residues.

Belongs to the FAM50 family. As to quaternary structure, interacts with EFTUD2, a component of the spliceosome U5 complex. Interacts with DDX41, a component of the spliceosome C complex. Widely expressed in embryonic and adult tissues.

It localises to the nucleus. Functionally, probably involved in the regulation of pre-mRNA splicing. This is Protein FAM50A (Fam50a) from Mus musculus (Mouse).